We begin with the raw amino-acid sequence, 165 residues long: Crossover junction endodeoxyribonuclease RuvC (165 aa).

Catalysis depends on residues D8, E69, and H141. Mg(2+) contacts are provided by D8, E69, and H141.

This sequence belongs to the RuvC family. As to quaternary structure, homodimer which binds Holliday junction (HJ) DNA. The HJ becomes 2-fold symmetrical on binding to RuvC with unstacked arms; it has a different conformation from HJ DNA in complex with RuvA. In the full resolvosome a probable DNA-RuvA(4)-RuvB(12)-RuvC(2) complex forms which resolves the HJ. The cofactor is Mg(2+).

It is found in the cytoplasm. It carries out the reaction Endonucleolytic cleavage at a junction such as a reciprocal single-stranded crossover between two homologous DNA duplexes (Holliday junction).. In terms of biological role, the RuvA-RuvB-RuvC complex processes Holliday junction (HJ) DNA during genetic recombination and DNA repair. Endonuclease that resolves HJ intermediates. Cleaves cruciform DNA by making single-stranded nicks across the HJ at symmetrical positions within the homologous arms, yielding a 5'-phosphate and a 3'-hydroxyl group; requires a central core of homology in the junction. The consensus cleavage sequence is 5'-(A/T)TT(C/G)-3'. Cleavage occurs on the 3'-side of the TT dinucleotide at the point of strand exchange. HJ branch migration catalyzed by RuvA-RuvB allows RuvC to scan DNA until it finds its consensus sequence, where it cleaves and resolves the cruciform DNA. The protein is Crossover junction endodeoxyribonuclease RuvC of Wolbachia pipientis subsp. Culex pipiens (strain wPip).